Here is a 381-residue protein sequence, read N- to C-terminus: Transcription termination factor 4, mitochondrial (381 aa).

Residues 1 to 42 (MAAFGRQVLDWHRLIPLTWACMARQTPHLGEQRRTTASLLRK) constitute a mitochondrion transit peptide. 5 MTERF repeats span residues 142–172 (CVVL…LGLG), 177–204 (KRVL…LKEK), 209–239 (VQQV…YAYF), 245–270 (HPDI…YLER), and 290–318 (LKDI…VFKK). Residues 310–327 (VEEFQVFKKLLAREEEES) form a dimerization with NSUN4 region. The segment at 322-381 (REEEESESSTSDDKRASLDEDEDDDDEEDNDEDDNDEDDDDEDDDEAEDNDEDEDDDEEE) is disordered. Over residues 340–381 (DEDEDDDDEEDNDEDDNDEDDDDEDDDEAEDNDEDEDDDEEE) the composition is skewed to acidic residues.

The protein belongs to the mTERF family. Heterodimer with NSUN4; this interaction may be required for NSUN4 recruitment to the mitochondrial large ribosomal subunit. In terms of processing, the mature mitochondrial protein exists in 2 forms differing at the level of their N-terminus, one is starting at residue 43 and the other at residue 48.

The protein localises to the mitochondrion. Its function is as follows. Regulator of mitochondrial ribosome biogenesis and translation. Binds to mitochondrial ribosomal RNAs 16S, 12S and 7S and targets NSUN4 RNA methyltransferase to the mitochondrial large ribosomal subunit (39S). The chain is Transcription termination factor 4, mitochondrial (MTERF4) from Homo sapiens (Human).